The primary structure comprises 79 residues: Defensin-like protein 117 (79 aa).

Positions 1-24 (MTTTKTMLVAFVLTLFFVISSVHC) are cleaved as a signal peptide. Intrachain disulfides connect Cys-40-Cys-75, Cys-46-Cys-68, Cys-53-Cys-73, and Cys-57-Cys-74.

It belongs to the DEFL family.

The protein localises to the secreted. This is Defensin-like protein 117 from Arabidopsis thaliana (Mouse-ear cress).